Consider the following 130-residue polypeptide: Small ribosomal subunit protein uS9 (130 aa).

This sequence belongs to the universal ribosomal protein uS9 family.

This Geobacillus sp. (strain WCH70) protein is Small ribosomal subunit protein uS9.